The following is a 464-amino-acid chain: Alpha-amylase (464 aa).

The first 21 residues, 1–21, serve as a signal peptide directing secretion; sequence MKNTAGILAIAGMLIAPLAHA. Residues H107 and R213 each contribute to the substrate site. D215 functions as the Nucleophile in the catalytic mechanism. 218 to 219 serves as a coordination point for substrate; sequence KH. E242 serves as the catalytic Proton donor. Substrate is bound by residues G247 and H313.

It belongs to the glycosyl hydrolase 13 family.

The protein localises to the secreted. The catalysed reaction is Endohydrolysis of (1-&gt;4)-alpha-D-glucosidic linkages in polysaccharides containing three or more (1-&gt;4)-alpha-linked D-glucose units.. The chain is Alpha-amylase from Aeromonas hydrophila.